We begin with the raw amino-acid sequence, 403 residues long: Acetate kinase (403 aa).

Mg(2+) is bound at residue Asn-7. Lys-14 is a binding site for ATP. Arg-90 contacts substrate. Asp-147 acts as the Proton donor/acceptor in catalysis. Residues 207 to 211 (HIGNG), 283 to 285 (DMR), and 331 to 335 (GVGEN) contribute to the ATP site. A Mg(2+)-binding site is contributed by Glu-386.

Belongs to the acetokinase family. As to quaternary structure, homodimer. It depends on Mg(2+) as a cofactor. Requires Mn(2+) as cofactor.

Its subcellular location is the cytoplasm. It carries out the reaction acetate + ATP = acetyl phosphate + ADP. Its pathway is metabolic intermediate biosynthesis; acetyl-CoA biosynthesis; acetyl-CoA from acetate: step 1/2. Its function is as follows. Catalyzes the formation of acetyl phosphate from acetate and ATP. Can also catalyze the reverse reaction. Phosphorylates propionate (54%) in addition to acetate (100%). Uses GTP (100%), ITP (163%), UTP (56%), and CTP (21%) as phosphoryl donors in addition to ATP (100%). This is Acetate kinase from Thermotoga maritima (strain ATCC 43589 / DSM 3109 / JCM 10099 / NBRC 100826 / MSB8).